The following is a 544-amino-acid chain: Chaperonin GroEL 1 (544 aa).

ATP contacts are provided by residues 29-32 (TLGP), lysine 50, 86-90 (DGTTT), glycine 414, and aspartate 494.

Belongs to the chaperonin (HSP60) family. In terms of assembly, forms a cylinder of 14 subunits composed of two heptameric rings stacked back-to-back. Interacts with the co-chaperonin GroES.

It is found in the cytoplasm. The enzyme catalyses ATP + H2O + a folded polypeptide = ADP + phosphate + an unfolded polypeptide.. In terms of biological role, together with its co-chaperonin GroES, plays an essential role in assisting protein folding. The GroEL-GroES system forms a nano-cage that allows encapsulation of the non-native substrate proteins and provides a physical environment optimized to promote and accelerate protein folding. The protein is Chaperonin GroEL 1 of Psychromonas ingrahamii (strain DSM 17664 / CCUG 51855 / 37).